Here is a 440-residue protein sequence, read N- to C-terminus: 3-phosphoshikimate 1-carboxyvinyltransferase (440 aa).

The 3-phosphoshikimate site is built by Lys19, Ser20, and Arg24. A phosphoenolpyruvate-binding site is contributed by Lys19. The phosphoenolpyruvate site is built by Gly92 and Arg121. Residues Ser166, Gln168, Asp315, and Lys342 each coordinate 3-phosphoshikimate. Gln168 is a phosphoenolpyruvate binding site. Asp315 acts as the Proton acceptor in catalysis. The phosphoenolpyruvate site is built by Arg346 and Arg399.

This sequence belongs to the EPSP synthase family. In terms of assembly, monomer.

The protein resides in the cytoplasm. It carries out the reaction 3-phosphoshikimate + phosphoenolpyruvate = 5-O-(1-carboxyvinyl)-3-phosphoshikimate + phosphate. Its pathway is metabolic intermediate biosynthesis; chorismate biosynthesis; chorismate from D-erythrose 4-phosphate and phosphoenolpyruvate: step 6/7. Catalyzes the transfer of the enolpyruvyl moiety of phosphoenolpyruvate (PEP) to the 5-hydroxyl of shikimate-3-phosphate (S3P) to produce enolpyruvyl shikimate-3-phosphate and inorganic phosphate. The polypeptide is 3-phosphoshikimate 1-carboxyvinyltransferase (Leptospira interrogans serogroup Icterohaemorrhagiae serovar Lai (strain 56601)).